The sequence spans 101 residues: NADH-quinone oxidoreductase subunit K (101 aa).

Transmembrane regions (helical) follow at residues 4–24, 30–50, and 61–81; these read LGHYLTLGAILFALSVIGIFL, IVLLMCIELMLLAVNLNFVAF, and VFVFFILTVAAAESAIGLAIL.

The protein belongs to the complex I subunit 4L family. NDH-1 is composed of 14 different subunits. Subunits NuoA, H, J, K, L, M, N constitute the membrane sector of the complex.

The protein localises to the cell inner membrane. It carries out the reaction a quinone + NADH + 5 H(+)(in) = a quinol + NAD(+) + 4 H(+)(out). In terms of biological role, NDH-1 shuttles electrons from NADH, via FMN and iron-sulfur (Fe-S) centers, to quinones in the respiratory chain. The immediate electron acceptor for the enzyme in this species is believed to be ubiquinone. Couples the redox reaction to proton translocation (for every two electrons transferred, four hydrogen ions are translocated across the cytoplasmic membrane), and thus conserves the redox energy in a proton gradient. In Leptothrix cholodnii (strain ATCC 51168 / LMG 8142 / SP-6) (Leptothrix discophora (strain SP-6)), this protein is NADH-quinone oxidoreductase subunit K.